Consider the following 726-residue polypeptide: Netrin-A (726 aa).

The signal sequence occupies residues 1 to 29; it reads MIRGILLLLLGTTRFSPIQCISNDVYFKM. The 267-residue stretch at 46-312 folds into the Laminin N-terminal domain; the sequence is EPRACIPDFV…AISDFSVGGR (267 aa). N108, N112, and N127 each carry an N-linked (GlcNAc...) asparagine glycan. 12 disulfides stabilise this stretch: C313–C322, C315–C332, C334–C343, C346–C366, C369–C378, C371–C396, C399–C408, C411–C429, C432–C444, C434–C451, C453–C462, and C465–C479. Laminin EGF-like domains lie at 313–368, 369–431, and 432–481; these read CKCN…ECKE, CNCN…VCKA, and CDCH…PCIK. N445 carries N-linked (GlcNAc...) asparagine glycosylation. The disordered stretch occupies residues 490–516; the sequence is LDTQNTAPEPDEPESSPGSGGDRNGAA. Cystine bridges form between C533–C671 and C549–C725. The NTR domain maps to 533–725; that stretch reads CGKCRVSTKR…KRFQRRARTC (193 aa). Residues N652 and N679 are each glycosylated (N-linked (GlcNAc...) asparagine).

At the midline of developing CNS at the time of commissure formation and in different subsets of neurons, muscles, and epidermal patches.

It is found in the secreted. The protein resides in the extracellular space. It localises to the extracellular matrix. In terms of biological role, netrins control guidance of CNS commissural axons at the midline and peripheral motor axons to their target muscles. The chain is Netrin-A (NetA) from Drosophila melanogaster (Fruit fly).